Reading from the N-terminus, the 282-residue chain is 2-dehydro-3-deoxyphosphooctonate aldolase (282 aa).

It belongs to the KdsA family.

The protein localises to the cytoplasm. The catalysed reaction is D-arabinose 5-phosphate + phosphoenolpyruvate + H2O = 3-deoxy-alpha-D-manno-2-octulosonate-8-phosphate + phosphate. It functions in the pathway carbohydrate biosynthesis; 3-deoxy-D-manno-octulosonate biosynthesis; 3-deoxy-D-manno-octulosonate from D-ribulose 5-phosphate: step 2/3. The protein operates within bacterial outer membrane biogenesis; lipopolysaccharide biosynthesis. The protein is 2-dehydro-3-deoxyphosphooctonate aldolase of Shewanella piezotolerans (strain WP3 / JCM 13877).